The chain runs to 1370 residues: Reverse gyrase 1 (1370 aa).

The RG N-terminal-type zinc-finger motif lies at Ala-6–Ser-47. Zn(2+) contacts are provided by Cys-16, Cys-19, Cys-34, and Cys-37. ATP is bound by residues Gln-95 and Ala-112–Thr-119. Positions Ala-99–Arg-287 constitute a Helicase ATP-binding domain. The DEAD box motif lies at Asp-220 to Asp-223. Positions Glu-643 to Gly-1370 are topoisomerase I. The Toprim domain occupies Thr-647–Val-825. Residue Glu-653 coordinates Mg(2+). The RG C-terminal-type zinc-finger motif lies at Ile-744–Ser-772. Residues Cys-747, Cys-750, Cys-761, and Cys-764 each coordinate Zn(2+). Asp-794 serves as a coordination point for Mg(2+). Residues Asp-841–Ala-1323 enclose the Topo IA-type catalytic domain. The O-(5'-phospho-DNA)-tyrosine intermediate role is filled by Tyr-1028.

In the N-terminal section; belongs to the DEAD box helicase family. DDVD subfamily. It in the C-terminal section; belongs to the type IA topoisomerase family. Monomer. Zn(2+) is required as a cofactor. Mg(2+) serves as cofactor.

The protein resides in the cytoplasm. The enzyme catalyses ATP + H2O = ADP + phosphate + H(+). Its function is as follows. Modifies the topological state of DNA by introducing positive supercoils in an ATP-dependent process, increasing the linking number in steps of +1. Binds to single-stranded DNA, transiently cleaves and then rejoins the ends, introducing a positive supercoil in the process. The scissile phosphodiester is attacked by the catalytic tyrosine of the enzyme, resulting in the formation of a DNA-(5'-phosphotyrosyl)-enzyme intermediate. Probably involved in rewinding DNA strands in regions of the chromosome that have opened up to allow replication, transcription, DNA repair and/or for DNA protection. The polypeptide is Reverse gyrase 1 (Aeropyrum pernix (strain ATCC 700893 / DSM 11879 / JCM 9820 / NBRC 100138 / K1)).